The following is a 469-amino-acid chain: Phosphatidylcholine:ceramide cholinephosphotransferase 1 (469 aa).

Positions 40-177 (TTKIGPKLET…GDKPASPHDR (138 aa)) are disordered. Basic and acidic residues-rich tracts occupy residues 72–91 (AAEK…HEET), 100–117 (SHHD…GDGK), and 162–177 (VRLE…PHDR). A run of 6 helical transmembrane segments spans residues 186-206 (LVAF…LSWI), 231-251 (LRLC…LILF), 262-282 (LCFI…VTPV), 300-320 (TFSL…LNLF), 327-347 (LCGD…ALFI), and 355-375 (FYIL…FLVL). The active site involves His-336. At 376 to 469 (SHGHYTIDVI…RNGAARPAFE (94 aa)) the chain is on the cytoplasmic side. Catalysis depends on residues His-379 and Asp-383.

This sequence belongs to the sphingomyelin synthase family.

The protein localises to the golgi apparatus membrane. It carries out the reaction an N-acylsphing-4-enine + a 1,2-diacyl-sn-glycero-3-phosphocholine = a sphingomyelin + a 1,2-diacyl-sn-glycerol. The enzyme catalyses an N-acyl-15-methylhexadecasphing-4-enine + a 1,2-diacyl-sn-glycero-3-phosphocholine = an N-acyl-15-methylhexadecasphing-4-enine-1-phosphocholine + a 1,2-diacyl-sn-glycerol. It participates in lipid metabolism; sphingolipid metabolism. In terms of biological role, sphingomyelin synthases (SM synthase or SMS) synthesize the sphingolipid sphingomyelin (SM) through transfer of the phosphatidyl head group of 1,2-diacyl-sn-glycero-3-phosphocholine (phosphatidylcholine, PC) on to the primary hydroxyl of ceramide (N-acylsphingoid base), yielding 1,2-diacyl-sn-glycerol (diacylglycerol, DAG) as a side product. Functions as a bidirectional lipid cholinephosphotransferases capable of converting PC and ceramide to SM and DAG and vice versa depending on the respective levels of ceramide and DAG as phosphocholine acceptors, respectively. The polypeptide is Phosphatidylcholine:ceramide cholinephosphotransferase 1 (sms-1) (Caenorhabditis elegans).